The following is a 386-amino-acid chain: Ovalbumin (386 aa).

Glycine 2 bears the N-acetylglycine mark. A signal peptide (not cleaved) is located at residues 22-48; that stretch reads HHANENIFYSPFTIISALAMVYLGAKD. Serine 69 bears the Phosphoserine mark. The cysteines at positions 74 and 121 are disulfide-linked. 2 N-linked (GlcNAc...) asparagine glycosylation sites follow: asparagine 293 and asparagine 312. Serine 345 carries the post-translational modification Phosphoserine. Asparagine 372 is a glycosylation site (N-linked (GlcNAc...) asparagine).

The protein belongs to the serpin family. Ov-serpin subfamily. Post-translationally, the signal sequence is not cleaved. The functional signal for membrane translocation of ovalbumin becomes accessible when the nascent chain is 50 to 60 residues long. The hydrophobic sequence which lies between residues 27 and 43 folds back on the preceding residues to form an amphipathic hairpin structure which is the signal element recognized by the membrane. As to expression, major protein of egg white.

It localises to the secreted. Its function is as follows. Storage protein of egg white. Lack protease inhibitory activity. This is Ovalbumin (SERPINB14) from Meleagris gallopavo (Wild turkey).